A 78-amino-acid polypeptide reads, in one-letter code: Acyl carrier protein (78 aa).

One can recognise a Carrier domain in the interval 2–77 (SSIEERVKKI…LAIDYINANL (76 aa)). Position 37 is an O-(pantetheine 4'-phosphoryl)serine (Ser37).

It belongs to the acyl carrier protein (ACP) family. In terms of processing, 4'-phosphopantetheine is transferred from CoA to a specific serine of apo-ACP by AcpS. This modification is essential for activity because fatty acids are bound in thioester linkage to the sulfhydryl of the prosthetic group.

It localises to the cytoplasm. It participates in lipid metabolism; fatty acid biosynthesis. Its function is as follows. Carrier of the growing fatty acid chain in fatty acid biosynthesis. This is Acyl carrier protein from Cellvibrio japonicus (strain Ueda107) (Pseudomonas fluorescens subsp. cellulosa).